Consider the following 41-residue polypeptide: Large ribosomal subunit protein bL36 (41 aa).

The protein belongs to the bacterial ribosomal protein bL36 family.

The sequence is that of Large ribosomal subunit protein bL36 from Xanthomonas axonopodis pv. citri (strain 306).